The primary structure comprises 416 residues: Gamma-glutamyl phosphate reductase (416 aa).

The protein belongs to the gamma-glutamyl phosphate reductase family.

The protein localises to the cytoplasm. It catalyses the reaction L-glutamate 5-semialdehyde + phosphate + NADP(+) = L-glutamyl 5-phosphate + NADPH + H(+). It participates in amino-acid biosynthesis; L-proline biosynthesis; L-glutamate 5-semialdehyde from L-glutamate: step 2/2. In terms of biological role, catalyzes the NADPH-dependent reduction of L-glutamate 5-phosphate into L-glutamate 5-semialdehyde and phosphate. The product spontaneously undergoes cyclization to form 1-pyrroline-5-carboxylate. The chain is Gamma-glutamyl phosphate reductase from Streptococcus pyogenes serotype M3 (strain ATCC BAA-595 / MGAS315).